A 202-amino-acid chain; its full sequence is Small ribosomal subunit protein uS4 (202 aa).

One can recognise an S4 RNA-binding domain in the interval 91-154 (SMLSSVLYNS…VNLPSVLAAI (64 aa)).

This sequence belongs to the universal ribosomal protein uS4 family. Part of the 30S ribosomal subunit. Contacts protein S5. The interaction surface between S4 and S5 is involved in control of translational fidelity.

In terms of biological role, one of the primary rRNA binding proteins, it binds directly to 16S rRNA where it nucleates assembly of the body of the 30S subunit. With S5 and S12 plays an important role in translational accuracy. In Ehrlichia ruminantium (strain Gardel), this protein is Small ribosomal subunit protein uS4.